The following is a 124-amino-acid chain: Small ribosomal subunit protein uS12 (124 aa).

At Asp89 the chain carries 3-methylthioaspartic acid.

Belongs to the universal ribosomal protein uS12 family. Part of the 30S ribosomal subunit. Contacts proteins S8 and S17. May interact with IF1 in the 30S initiation complex.

Its function is as follows. With S4 and S5 plays an important role in translational accuracy. In terms of biological role, interacts with and stabilizes bases of the 16S rRNA that are involved in tRNA selection in the A site and with the mRNA backbone. Located at the interface of the 30S and 50S subunits, it traverses the body of the 30S subunit contacting proteins on the other side and probably holding the rRNA structure together. The combined cluster of proteins S8, S12 and S17 appears to hold together the shoulder and platform of the 30S subunit. The protein is Small ribosomal subunit protein uS12 of Shewanella piezotolerans (strain WP3 / JCM 13877).